Consider the following 483-residue polypeptide: uncharacterized protein (483 aa).

One can recognise a TRAM domain in the interval 11 to 71 (RYRKGDIIEL…SRYLEARAIE (61 aa)). Residues cysteine 84, cysteine 90, cysteine 93, and cysteine 187 each contribute to the [4Fe-4S] cluster site. 4 residues coordinate S-adenosyl-L-methionine: glutamine 312, tyrosine 341, glutamate 362, and aspartate 412. The active-site Nucleophile is the cysteine 439.

Belongs to the class I-like SAM-binding methyltransferase superfamily. RNA M5U methyltransferase family.

This is an uncharacterized protein from Chlorobaculum tepidum (strain ATCC 49652 / DSM 12025 / NBRC 103806 / TLS) (Chlorobium tepidum).